Reading from the N-terminus, the 349-residue chain is tRNA pseudouridine synthase D (349 aa).

Phe-27 serves as a coordination point for substrate. Residue Asp-80 is the Nucleophile of the active site. A substrate-binding site is contributed by Asn-129. In terms of domain architecture, TRUD spans 155–303 (GVPNYFGAQR…VEAARRAMLL (149 aa)). Phe-329 serves as a coordination point for substrate.

The protein belongs to the pseudouridine synthase TruD family.

It catalyses the reaction uridine(13) in tRNA = pseudouridine(13) in tRNA. Functionally, responsible for synthesis of pseudouridine from uracil-13 in transfer RNAs. In Escherichia coli O9:H4 (strain HS), this protein is tRNA pseudouridine synthase D.